The primary structure comprises 382 residues: Succinate--CoA ligase [ADP-forming] subunit beta (382 aa).

Residues 9-240 (KELLKKYGLP…ITQIDPLEVE (232 aa)) enclose the ATP-grasp domain. 4 residues coordinate ATP: Lys-46, Glu-98, Thr-101, and Glu-106. Mg(2+) is bound by residues Asn-195 and Asp-209. Substrate is bound by residues Asn-260 and 317-319 (GIL).

The protein belongs to the succinate/malate CoA ligase beta subunit family. In terms of assembly, heterotetramer of two alpha and two beta subunits. Requires Mg(2+) as cofactor.

The enzyme catalyses succinate + ATP + CoA = succinyl-CoA + ADP + phosphate. It catalyses the reaction GTP + succinate + CoA = succinyl-CoA + GDP + phosphate. The protein operates within carbohydrate metabolism; tricarboxylic acid cycle; succinate from succinyl-CoA (ligase route): step 1/1. Functionally, succinyl-CoA synthetase functions in the citric acid cycle (TCA), coupling the hydrolysis of succinyl-CoA to the synthesis of either ATP or GTP and thus represents the only step of substrate-level phosphorylation in the TCA. The beta subunit provides nucleotide specificity of the enzyme and binds the substrate succinate, while the binding sites for coenzyme A and phosphate are found in the alpha subunit. In Hydrogenobaculum sp. (strain Y04AAS1), this protein is Succinate--CoA ligase [ADP-forming] subunit beta.